Consider the following 100-residue polypeptide: Large ribosomal subunit protein uL23 (100 aa).

This sequence belongs to the universal ribosomal protein uL23 family. Part of the 50S ribosomal subunit. Contacts protein L29, and trigger factor when it is bound to the ribosome.

Its function is as follows. One of the early assembly proteins it binds 23S rRNA. One of the proteins that surrounds the polypeptide exit tunnel on the outside of the ribosome. Forms the main docking site for trigger factor binding to the ribosome. This chain is Large ribosomal subunit protein uL23, found in Prochlorococcus marinus (strain AS9601).